The primary structure comprises 142 residues: Hemoglobin subunit alpha-1 (142 aa).

Serine 1 carries the N-acetylserine modification. Positions 1 to 142 (SLSVKDKAAV…VALALAERYR (142 aa)) constitute a Globin domain. Position 59 (histidine 59) interacts with O2. Histidine 88 contributes to the heme b binding site.

It belongs to the globin family. As to quaternary structure, hb 1 is a heterotetramer of two alpha-1 and two beta-1 chains. As to expression, red blood cells.

In terms of biological role, involved in oxygen transport from gills to the various peripheral tissues. This Gobionotothen gibberifrons (Humped rockcod) protein is Hemoglobin subunit alpha-1 (hba1).